The following is a 916-amino-acid chain: Protein O-GlcNAcase (916 aa).

The disordered stretch occupies residues 1-46 (MVQKESQAALEERESERNANPAAASGASLEQSVAPAPGEDNPSGAG). The GH84 domain occupies 60 to 336 (FLCGVVEGFY…TLATWYKSNM (277 aa)). Residues Gly-67, Lys-98, and Asp-174 each contribute to the a protein site. Catalysis depends on Asp-175, which acts as the Proton donor. A protein-binding positions include Tyr-219, 278–280 (WDN), Asp-285, and Asn-313. Ser-364 is modified (phosphoserine). A disordered region spans residues 443 to 465 (ALSGEPSVLTKEEEKKQPDEEPM). A compositionally biased stretch (basic and acidic residues) spans 452 to 461 (TKEEEKKQPD).

This sequence belongs to the glycosyl hydrolase 84 family. Monomer. Interacts with CLOCK. Post-translationally, proteolytically cleaved by caspase-3 during apoptosis. The fragments interact with each other; cleavage does not decrease enzyme activity.

Its subcellular location is the cytoplasm. The protein resides in the nucleus. The catalysed reaction is 3-O-(N-acetyl-beta-D-glucosaminyl)-L-seryl-[protein] + H2O = N-acetyl-D-glucosamine + L-seryl-[protein]. It carries out the reaction 3-O-(N-acetyl-beta-D-glucosaminyl)-L-threonyl-[protein] + H2O = L-threonyl-[protein] + N-acetyl-D-glucosamine. In terms of biological role, cleaves GlcNAc but not GalNAc from O-glycosylated proteins. Deglycosylates a large and diverse number of proteins, such as CRYAB, ELK1, GSDMD, LMNB1 and TAB1. Can use p-nitrophenyl-beta-GlcNAc and 4-methylumbelliferone-GlcNAc as substrates but not p-nitrophenyl-beta-GalNAc or p-nitrophenyl-alpha-GlcNAc (in vitro). Does not bind acetyl-CoA and does not have histone acetyltransferase activity. This Mus musculus (Mouse) protein is Protein O-GlcNAcase.